A 436-amino-acid chain; its full sequence is N-lysine methyltransferase SMYD2 (436 aa).

The region spanning 10-244 (GGLERFASPG…PGEEVFTSYI (235 aa)) is the SET domain. 20–22 (KGR) provides a ligand contact to S-adenosyl-L-methionine. Positions 55, 58, 68, 71, 77, 81, 89, and 93 each coordinate Zn(2+). The MYND-type zinc-finger motif lies at 55–93 (CDGCFARKEGLSKCGRCKQAFYCNVECQKEDWPMHKLEC). Residues His-140, 209 to 210 (NH), and 261 to 263 (YFF) each bind S-adenosyl-L-methionine.

It belongs to the class V-like SAM-binding methyltransferase superfamily.

The protein localises to the cytoplasm. It localises to the cytosol. It is found in the nucleus. The enzyme catalyses L-lysyl(4)-[histone H3] + 3 S-adenosyl-L-methionine = N(6),N(6),N(6)-trimethyl-L-lysyl(4)-[histone H3] + 3 S-adenosyl-L-homocysteine + 3 H(+). It carries out the reaction L-lysyl-[protein] + S-adenosyl-L-methionine = N(6)-methyl-L-lysyl-[protein] + S-adenosyl-L-homocysteine + H(+). Protein-lysine N-methyltransferase that methylates both histones and non-histone proteins, including p53/TP53 and RB1. Specifically trimethylates histone H3 'Lys-4' (H3K4me3) in vivo. The activity requires interaction with HSP90alpha. Shows even higher methyltransferase activity on p53/TP53. Monomethylates 'Lys-370' of p53/TP53, leading to decreased DNA-binding activity and subsequent transcriptional regulation activity of p53/TP53. Monomethylates RB1 at 'Lys-860'. In Gallus gallus (Chicken), this protein is N-lysine methyltransferase SMYD2 (SMYD2).